A 528-amino-acid chain; its full sequence is Peptide chain release factor 3 (528 aa).

A tr-type G domain is found at 10 to 280 (AKRRTFGIIS…IDMAPAPGPR (271 aa)). GTP-binding positions include 19-26 (SHPDAGKT), 87-91 (DTPGH), and 141-144 (NKLD).

Belongs to the TRAFAC class translation factor GTPase superfamily. Classic translation factor GTPase family. PrfC subfamily.

The protein localises to the cytoplasm. Increases the formation of ribosomal termination complexes and stimulates activities of RF-1 and RF-2. It binds guanine nucleotides and has strong preference for UGA stop codons. It may interact directly with the ribosome. The stimulation of RF-1 and RF-2 is significantly reduced by GTP and GDP, but not by GMP. This is Peptide chain release factor 3 from Desulfotalea psychrophila (strain LSv54 / DSM 12343).